Consider the following 443-residue polypeptide: Immediate-early protein ICP-46 homolog (443 aa).

Residues 82–110 are a coiled coil; sequence EFSEHEQEELKEKMAQLNHCLEDCELDYS.

The protein belongs to the IIV-6 393L family.

This chain is Immediate-early protein ICP-46 homolog, found in Aedes vexans (Inland floodwater mosquito).